Consider the following 335-residue polypeptide: BTB and MATH domain-containing protein 39 (335 aa).

The region spanning 14 to 141 is the MATH domain; that stretch reads MKTLCFKIMN…NGVFTIEFDL (128 aa). The BTB domain maps to 161–226; it reads ADGKLIVEDQ…LQLDEFKVNV (66 aa).

In Caenorhabditis briggsae, this protein is BTB and MATH domain-containing protein 39.